A 282-amino-acid chain; its full sequence is Probable protein phosphatase 2C 10 (282 aa).

One can recognise a PPM-type phosphatase domain in the interval K34 to L281. D71, G72, D233, and D272 together coordinate Mn(2+).

It belongs to the PP2C family. Mg(2+) is required as a cofactor. Requires Mn(2+) as cofactor.

It carries out the reaction O-phospho-L-seryl-[protein] + H2O = L-seryl-[protein] + phosphate. It catalyses the reaction O-phospho-L-threonyl-[protein] + H2O = L-threonyl-[protein] + phosphate. The sequence is that of Probable protein phosphatase 2C 10 from Arabidopsis thaliana (Mouse-ear cress).